A 945-amino-acid polypeptide reads, in one-letter code: Kinesin-like protein CIN8 (945 aa).

The Kinesin motor domain occupies 22 to 409; the sequence is NITVAVRCRG…LEYAAKAKNI (388 aa). 114 to 121 is an ATP binding site; the sequence is GMTSTGKT. The disordered stretch occupies residues 190–243; sequence IFDSSSMNHSSRASSQSNSPREPEVAHNGFSRRRQRPPPVKANRMSATKQQLSE. Residues 193-208 are compositionally biased toward low complexity; sequence SSSMNHSSRASSQSNS. Over residues 234–243 the composition is skewed to polar residues; the sequence is MSATKQQLSE. Coiled-coil stretches lie at residues 450–562 and 634–675; these read MSHE…DIKE and LKEF…YLDQ.

Belongs to the TRAFAC class myosin-kinesin ATPase superfamily. Kinesin family. BimC subfamily.

Its subcellular location is the cytoplasm. The protein localises to the cytoskeleton. It is found in the spindle. Functionally, elongates the mitotic spindle by interacting with spindle microtubules to generate an outward force pushing spindle poles apart. Following spindle assembly, CIN8 and KIP1 apparently act to oppose a force, possibly generated by KAR3, that draws separated poles back together. This Eremothecium gossypii (strain ATCC 10895 / CBS 109.51 / FGSC 9923 / NRRL Y-1056) (Yeast) protein is Kinesin-like protein CIN8 (CIN8).